Consider the following 239-residue polypeptide: ATP synthase subunit b (239 aa).

The span at 1-22 (MYAQEAQQKPEAQQSAPAAEQP) shows a compositional bias: low complexity. Residues 1-64 (MYAQEAQQKP…GEEEAGEHME (64 aa)) form a disordered region. Composition is skewed to basic and acidic residues over residues 23–33 (KPAEEQAKPEQ) and 45–64 (ELSE…EHME). Residues 85–105 (SYWIAMAFNFAIVFALLGWAM) traverse the membrane as a helical segment.

This sequence belongs to the ATPase B chain family. In terms of assembly, F-type ATPases have 2 components, F(1) - the catalytic core - and F(0) - the membrane proton channel. F(1) has five subunits: alpha(3), beta(3), gamma(1), delta(1), epsilon(1). F(0) has three main subunits: a(1), b(2) and c(10-14). The alpha and beta chains form an alternating ring which encloses part of the gamma chain. F(1) is attached to F(0) by a central stalk formed by the gamma and epsilon chains, while a peripheral stalk is formed by the delta and b chains.

The protein localises to the cell inner membrane. Functionally, f(1)F(0) ATP synthase produces ATP from ADP in the presence of a proton or sodium gradient. F-type ATPases consist of two structural domains, F(1) containing the extramembraneous catalytic core and F(0) containing the membrane proton channel, linked together by a central stalk and a peripheral stalk. During catalysis, ATP synthesis in the catalytic domain of F(1) is coupled via a rotary mechanism of the central stalk subunits to proton translocation. In terms of biological role, component of the F(0) channel, it forms part of the peripheral stalk, linking F(1) to F(0). This is ATP synthase subunit b from Koribacter versatilis (strain Ellin345).